The chain runs to 257 residues: Thiazole synthase (257 aa).

Catalysis depends on Lys-99, which acts as the Schiff-base intermediate with DXP. 1-deoxy-D-xylulose 5-phosphate contacts are provided by residues Gly-160, 186–187, and 208–209; these read AG and NT.

This sequence belongs to the ThiG family. As to quaternary structure, homotetramer. Forms heterodimers with either ThiH or ThiS.

The protein resides in the cytoplasm. The catalysed reaction is [ThiS sulfur-carrier protein]-C-terminal-Gly-aminoethanethioate + 2-iminoacetate + 1-deoxy-D-xylulose 5-phosphate = [ThiS sulfur-carrier protein]-C-terminal Gly-Gly + 2-[(2R,5Z)-2-carboxy-4-methylthiazol-5(2H)-ylidene]ethyl phosphate + 2 H2O + H(+). Its pathway is cofactor biosynthesis; thiamine diphosphate biosynthesis. Catalyzes the rearrangement of 1-deoxy-D-xylulose 5-phosphate (DXP) to produce the thiazole phosphate moiety of thiamine. Sulfur is provided by the thiocarboxylate moiety of the carrier protein ThiS. In vitro, sulfur can be provided by H(2)S. The protein is Thiazole synthase of Thermodesulfovibrio yellowstonii (strain ATCC 51303 / DSM 11347 / YP87).